The chain runs to 679 residues: DNA ligase (679 aa).

Residues 86–90 (DEAYD) and 129–130 (ST) each bind NAD(+). Lysine 167 serves as the catalytic N6-AMP-lysine intermediate. Residues arginine 183, glutamate 214, and lysine 326 each contribute to the NAD(+) site. Zn(2+) contacts are provided by cysteine 417, cysteine 420, cysteine 433, and cysteine 439. One can recognise a BRCT domain in the interval 599-679 (GEKSPISGKT…EAYRQLVSLD (81 aa)).

This sequence belongs to the NAD-dependent DNA ligase family. LigA subfamily. Mg(2+) is required as a cofactor. Requires Mn(2+) as cofactor.

The catalysed reaction is NAD(+) + (deoxyribonucleotide)n-3'-hydroxyl + 5'-phospho-(deoxyribonucleotide)m = (deoxyribonucleotide)n+m + AMP + beta-nicotinamide D-nucleotide.. Its function is as follows. DNA ligase that catalyzes the formation of phosphodiester linkages between 5'-phosphoryl and 3'-hydroxyl groups in double-stranded DNA using NAD as a coenzyme and as the energy source for the reaction. It is essential for DNA replication and repair of damaged DNA. This is DNA ligase from Desulfotalea psychrophila (strain LSv54 / DSM 12343).